The following is a 575-amino-acid chain: Glycosyltransferase family 92 protein At1g27200 (575 aa).

The chain crosses the membrane as a helical span at residues phenylalanine 22 to serine 44. Residues leucine 293–lysine 540 enclose the GT92 domain.

This sequence belongs to the glycosyltransferase 92 family.

Its subcellular location is the membrane. This chain is Glycosyltransferase family 92 protein At1g27200, found in Arabidopsis thaliana (Mouse-ear cress).